A 274-amino-acid chain; its full sequence is MIIARTVRELQEAKKELNGSIGFVPTMGALHQGHLSLIQQAKKENDHLIVSIFVNPTQFLEGEDLNAYPRREEADRKICEVAGVDIVFMPEIGQMYEKDELCIGAPAIRGYILEGEKRPGHFDGMLQVVMKLLNLSSATRAYFGKKDAQQLSLITQMVKNYFMDVQIIPCEIIRDEYGLALSSRNVYLNEEEKHRALALSRSLKRATKMVMQGELDVEAIKKEMMQVLSETDRVEYIAIVDRQFKALEKVQIGNTIILVAAWIGKPRLIDNIWI.

27–34 (MGALHQGH) contacts ATP. Residue histidine 34 is the Proton donor of the active site. Glutamine 58 is a binding site for (R)-pantoate. Glutamine 58 contacts beta-alanine. Position 144 to 147 (144 to 147 (GKKD)) interacts with ATP. Residue glutamine 150 coordinates (R)-pantoate. Residues isoleucine 173 and 181–184 (LSSR) contribute to the ATP site.

The protein belongs to the pantothenate synthetase family. As to quaternary structure, homodimer.

It localises to the cytoplasm. It carries out the reaction (R)-pantoate + beta-alanine + ATP = (R)-pantothenate + AMP + diphosphate + H(+). Its pathway is cofactor biosynthesis; (R)-pantothenate biosynthesis; (R)-pantothenate from (R)-pantoate and beta-alanine: step 1/1. Functionally, catalyzes the condensation of pantoate with beta-alanine in an ATP-dependent reaction via a pantoyl-adenylate intermediate. The polypeptide is Pantothenate synthetase (Sulfurovum sp. (strain NBC37-1)).